A 474-amino-acid polypeptide reads, in one-letter code: Myocyte-specific enhancer factor 2C (474 aa).

Residues 3 to 57 (RKKIQITRIMDERNRQVTFTKRKFGLMKKAYELSVLCDCEIALIIFNSTNKLFQY) form the MADS-box domain. Lysine 4 is modified (N6-acetyllysine). Residues 58-86 (ASTDMDKVLLKYTEYNEPHESRTNSDIVE) constitute a DNA-binding region (mef2-type). Position 59 is a phosphoserine; by CK2 (serine 59). Residues 91 to 118 (KGLNGCDSPDPDADDSVGHSPESEDKYR) form a disordered region. 2 positions are modified to phosphoserine: serine 98 and serine 106. Glycine 108 carries the post-translational modification Phosphothreonine. At serine 110 the chain carries Phosphoserine. 2 positions are modified to N6-acetyllysine: lysine 116 and lysine 119. A phosphoserine mark is found at serine 222 and serine 228. N6-acetyllysine occurs at positions 234 and 239. A Phosphoserine modification is found at serine 240. An N6-acetyllysine mark is found at lysine 252 and lysine 264. The beta domain stretch occupies residues 271–278 (SEDVDLLL). 2 positions are modified to phosphothreonine; by MAPK14: threonine 293 and threonine 300. The tract at residues 368–399 (ACTSTHLSQSSNLSLPSTQSLSIKSEPVSPPR) is transcription repressor. The span at 375 to 390 (SQSSNLSLPSTQSLSI) shows a compositional bias: polar residues. The disordered stretch occupies residues 375-474 (SQSSNLSLPS…RMRLSEGWAT (100 aa)). A Glycyl lysine isopeptide (Lys-Gly) (interchain with G-Cter in SUMO) cross-link involves residue lysine 391. Serine 396 carries the phosphoserine; by CDK5 modification. A Phosphoserine; by MAPK7 modification is found at serine 420. Residues 420–433 (SPVDSLSSCSSSYD) are compositionally biased toward low complexity. Residues 434–444 (GSDREDHRNEF) are compositionally biased toward basic and acidic residues. Serine 446 carries the phosphoserine modification.

Belongs to the MEF2 family. Forms a complex with class II HDACs in undifferentiating cells. On myogenic differentiation, HDACs are released into the cytoplasm allowing MEF2s to interact with other proteins for activation. Interacts with EP300 in differentiating cells; the interaction acetylates MEF2C leading to increased DNA binding and activation. Interacts with HDAC7 and CARM1. Interacts with HDAC4, HDAC7 AND HDAC9; the interaction with HDACs represses transcriptional activity. Interacts with LPIN1. Interacts with MYOCD. Interacts with AKAP13. Interacts with FOXK1; the interaction inhibits MEF2C transactivation activity. Interacts (via N-terminus) with HABP4; this interaction decreases DNA-binding activity of MEF2C in myocardial cells in response to mechanical stress. Interacts with JPH2; interaction specifically takes place with the Junctophilin-2 N-terminal fragment cleavage product of JPH2. Interacts (via MADS box) with SOX18. Interacts with PHF7; the interaction promotes MEF2C binding to its transcription targets. Phosphorylation on Ser-59 enhances DNA binding activity. Phosphorylation on Ser-396 is required for Lys-391 sumoylation and inhibits transcriptional activity. In terms of processing, acetylated by p300 on several sites in diffentiating myocytes. Acetylation on Lys-4 increases DNA binding and transactivation. Post-translationally, sumoylated on Lys-391 with SUMO2 but not by SUMO1 represses transcriptional activity. Proteolytically cleaved in cerebellar granule neurons, probably by caspase 7, following neurotoxicity. Preferentially cleaves the CDK5-mediated hyperphosphorylated form which leads to neuron apoptosis and transcriptional inactivation. Widely expressed though mainly restricted to skeletal and cardiac muscle, brain, neurons and lymphocytes. Beta domain-lacking isoforms are the most predominantly expressed in all tissues including skeletal and cardiac muscle and brain. Only brain expresses all isoforms. Expression occurs primarily in the internal granule cell layer of the olfactory bulb, cortex, thalamus, hippocampus and cerebellum. Low levels in the cerebellum and hindbrain. Expressed throughout the cortex, including the frontal and entorhinal cortex, dentate gyrus, and basolateral amygdala. Selectively expressed in B-cells but not in T-cells, and its expression increases as B-cells mature.

It is found in the nucleus. It localises to the cytoplasm. Its subcellular location is the sarcoplasm. Its function is as follows. Transcription activator which binds specifically to the MEF2 element present in the regulatory regions of many muscle-specific genes. Controls cardiac morphogenesis and myogenesis, and is also involved in vascular development. Enhances transcriptional activation mediated by SOX18. May also be involved in neurogenesis and in the development of cortical architecture. Isoforms that lack the repressor domain are more active than isoform 1. Plays an essential role in hippocampal-dependent learning and memory by suppressing the number of excitatory synapses and thus regulating basal and evoked synaptic transmission. Crucial for normal neuronal development, distribution, and electrical activity in the neocortex. Necessary for proper development of megakaryocytes and platelets and for bone marrow B-lymphopoiesis. Required for B-cell survival and proliferation in response to BCR stimulation, efficient IgG1 antibody responses to T-cell-dependent antigens and for normal induction of germinal center B-cells. The sequence is that of Myocyte-specific enhancer factor 2C from Mus musculus (Mouse).